Reading from the N-terminus, the 79-residue chain is DNA-directed RNA polymerase subunit omega (79 aa).

This sequence belongs to the RNA polymerase subunit omega family. In terms of assembly, in cyanobacteria the RNAP catalytic core is composed of 2 alpha, 1 beta, 1 beta', 1 gamma and 1 omega subunit. When a sigma factor is associated with the core the holoenzyme is formed, which can initiate transcription.

The catalysed reaction is RNA(n) + a ribonucleoside 5'-triphosphate = RNA(n+1) + diphosphate. In terms of biological role, promotes RNA polymerase assembly. Latches the N- and C-terminal regions of the beta' subunit thereby facilitating its interaction with the beta and alpha subunits. In Synechococcus sp. (strain JA-2-3B'a(2-13)) (Cyanobacteria bacterium Yellowstone B-Prime), this protein is DNA-directed RNA polymerase subunit omega.